Consider the following 171-residue polypeptide: 3-hydroxydecanoyl-[acyl-carrier-protein] dehydratase (171 aa).

Residue His70 is part of the active site.

Belongs to the thioester dehydratase family. FabA subfamily. In terms of assembly, homodimer.

It is found in the cytoplasm. It carries out the reaction a (3R)-hydroxyacyl-[ACP] = a (2E)-enoyl-[ACP] + H2O. The catalysed reaction is (3R)-hydroxydecanoyl-[ACP] = (2E)-decenoyl-[ACP] + H2O. The enzyme catalyses (2E)-decenoyl-[ACP] = (3Z)-decenoyl-[ACP]. It participates in lipid metabolism; fatty acid biosynthesis. Functionally, necessary for the introduction of cis unsaturation into fatty acids. Catalyzes the dehydration of (3R)-3-hydroxydecanoyl-ACP to E-(2)-decenoyl-ACP and then its isomerization to Z-(3)-decenoyl-ACP. Can catalyze the dehydratase reaction for beta-hydroxyacyl-ACPs with saturated chain lengths up to 16:0, being most active on intermediate chain length. This Azotobacter vinelandii (strain DJ / ATCC BAA-1303) protein is 3-hydroxydecanoyl-[acyl-carrier-protein] dehydratase.